The following is a 394-amino-acid chain: Dual-specificity RNA methyltransferase RlmN (394 aa).

The active-site Proton acceptor is the Glu92. Residues 98–341 (ENDRGTLCIS…TTVRRTRGDD (244 aa)) form the Radical SAM core domain. A disulfide bridge connects residues Cys105 and Cys346. The [4Fe-4S] cluster site is built by Cys112, Cys116, and Cys119. S-adenosyl-L-methionine contacts are provided by residues 166–167 (GE), Ser198, 220–222 (SLH), and Asn303. The active-site S-methylcysteine intermediate is Cys346. The segment at 374–394 (DSAVQRRADAAPSGSATETTR) is disordered.

Belongs to the radical SAM superfamily. RlmN family. [4Fe-4S] cluster is required as a cofactor.

It localises to the cytoplasm. It catalyses the reaction adenosine(2503) in 23S rRNA + 2 reduced [2Fe-2S]-[ferredoxin] + 2 S-adenosyl-L-methionine = 2-methyladenosine(2503) in 23S rRNA + 5'-deoxyadenosine + L-methionine + 2 oxidized [2Fe-2S]-[ferredoxin] + S-adenosyl-L-homocysteine. The enzyme catalyses adenosine(37) in tRNA + 2 reduced [2Fe-2S]-[ferredoxin] + 2 S-adenosyl-L-methionine = 2-methyladenosine(37) in tRNA + 5'-deoxyadenosine + L-methionine + 2 oxidized [2Fe-2S]-[ferredoxin] + S-adenosyl-L-homocysteine. Specifically methylates position 2 of adenine 2503 in 23S rRNA and position 2 of adenine 37 in tRNAs. m2A2503 modification seems to play a crucial role in the proofreading step occurring at the peptidyl transferase center and thus would serve to optimize ribosomal fidelity. The protein is Dual-specificity RNA methyltransferase RlmN of Methylibium petroleiphilum (strain ATCC BAA-1232 / LMG 22953 / PM1).